A 311-amino-acid chain; its full sequence is Ketoisovalerate oxidoreductase subunit VorB (311 aa).

As to quaternary structure, heterotetramer of one alpha, one beta, one delta and one gamma chain.

It catalyses the reaction 3-methyl-2-oxobutanoate + 2 oxidized [2Fe-2S]-[ferredoxin] + CoA = 2-methylpropanoyl-CoA + 2 reduced [2Fe-2S]-[ferredoxin] + CO2 + H(+). The protein is Ketoisovalerate oxidoreductase subunit VorB (vorB) of Pyrococcus horikoshii (strain ATCC 700860 / DSM 12428 / JCM 9974 / NBRC 100139 / OT-3).